The sequence spans 708 residues: Double-strand break repair protein MRE11 (708 aa).

At S2 the chain carries N-acetylserine. S2 bears the Phosphoserine mark. Mn(2+) contacts are provided by D20, H22, and D60. An interaction with NBN region spans residues 87–117 (RPVQFEILSDQSVNFGFSKFPWVNYQDGNLN). N128 contributes to the Mn(2+) binding site. H129 serves as the catalytic Proton donor. Residues H217, H245, and H247 each coordinate Mn(2+). A Glycyl lysine isopeptide (Lys-Gly) (interchain with G-Cter in SUMO2) cross-link involves residue K255. S275 carries the phosphoserine modification. K282 participates in a covalent cross-link: Glycyl lysine isopeptide (Lys-Gly) (interchain with G-Cter in UFM1). A Glycyl lysine isopeptide (Lys-Gly) (interchain with G-Cter in ubiquitin) cross-link involves residue K339. A Glycyl lysine isopeptide (Lys-Gly) (interchain with G-Cter in SUMO) cross-link involves residue K384. K416 participates in a covalent cross-link: Glycyl lysine isopeptide (Lys-Gly) (interchain with G-Cter in SUMO2). K467 is covalently cross-linked (Glycyl lysine isopeptide (Lys-Gly) (interchain with G-Cter in SUMO)). K480 is covalently cross-linked (Glycyl lysine isopeptide (Lys-Gly) (interchain with G-Cter in ubiquitin)). 2 disordered regions span residues 507-540 (TRQK…ASAF) and 556-614 (NDSD…AVSA). Residues 569–579 (GRGRGRGRRGG) show a composition bias toward basic residues. 9 positions are modified to asymmetric dimethylarginine: R570, R572, R574, R576, R577, R580, R587, R592, and R594. The GAR motif lies at 570–594 (RGRGRGRRGGRGQNSASRGGSQRGR). The span at 599 to 614 (LETSTRSRNSKTAVSA) shows a compositional bias: polar residues. At S619 the chain carries Phosphoserine. K625 is covalently cross-linked (Glycyl lysine isopeptide (Lys-Gly) (interchain with G-Cter in SUMO2)). S641 is modified (phosphoserine). At S649 the chain carries Phosphoserine; by PLK1. The disordered stretch occupies residues 651–708 (VEEDIFPTTSKTDQRWSSTSSSKIMSQSQVSKGVDFESSEDDDDDPFMNTSSLRRNRR). The segment covering 667–681 (SSTSSSKIMSQSQVS) has biased composition (low complexity). N6-lactoyllysine is present on K673. S676 and S678 each carry phosphoserine; by ATM. Acidic residues predominate over residues 687 to 696 (ESSEDDDDDP). At S688 the chain carries Phosphoserine; by CDK2. 2 positions are modified to phosphoserine: S689 and S701. Over residues 698 to 708 (MNTSSLRRNRR) the composition is skewed to polar residues.

It belongs to the MRE11/RAD32 family. As to quaternary structure, component of the MRN complex composed of two heterodimers RAD50 and MRE11 associated with a single NBN. The MRN complexes dimerize on DNA to form joined MRN-MRN oligomers required for DNA double-strand break repair. As part of the MRN complex, interacts with MCM9; the interaction recruits the complex to DNA repair sites. Component of the BASC complex, at least composed of BRCA1, MSH2, MSH6, MLH1, ATM, BLM, RAD50, MRE11 and NBN. Found in a complex with TERF2. Interacts with DCLRE1C/Artemis and DCLRE1B/Apollo. Interacts with ATF2. Interacts with EXD2. Interacts with MRNIP. Interacts with SAMHD1; leading to stimulate 3'-5' exonuclease activity. Interacts (when ubiquitinated) with UBQLN4 (via its UBA domain). Interacts with CYREN (via XLF motif). Interacts with GFI1; promoting methylation by PRMT1. Interacts with DYNLL1; inhibiting the activity of MRE11. Interacts with C1QBP and RAD50; interaction takes place in absence of DNA damage to form the MRC (MRE11-RAD50-C1QBP) complex that inhibits the activity of MRE11. Interacts with AGER/RAGE. AGER is recruited to DNA double-strand break sites where it enhances MRE11 endonuclease activity to promote DNA repair. In terms of assembly, (Microbial infection) Interacts with herpes simplex virus 1 protein UL12. It depends on Mn(2+) as a cofactor. Post-translationally, phosphorylated by ATM at Ser-676 and Ser-678 in response to DNA damage, promoting MRE11 activity: phosphorylation activates MRE11 by preventing the interaction between MRE11 and the C1QBP inhibitor. Phosphorylation at Ser-649 by PLK1 primes for phosphorylation at Ser-688 by CK2, inhibiting recruitment of the MRN complex to DNA damage sites. In terms of processing, asymmetric dimethylation by PRMT1 promotes MRE11 exonuclease activity. Lactylation at Lys-673 by CREBBP/CBP in response to DNA damage promotes DNA binding and MRE11 activity. Post-translationally, acetylated on lysine residues by KAT2A /GCN5. In terms of processing, ubiquitinated following DNA damage. Ubiquitination triggers interaction with UBQLN4, leading to MRE11 removal from chromatin and degradation by the proteasome. Ubiquitinated at Lys-339 and Lys-480 by RNF126 via 'Lys-27'- and 'Lys-29'-linked polyubiquitin chains, promoting the exonuclease activity of MRE11. SUMOylated by PIAS1, stabilizing MRE11 on chromatin during end resection. DeSUMOylated by SENP3 following removal from DNA double-strand breaks (DSBs). Post-translationally, ufmylation at Lys-282 promotes MRE11 activity and is required for activation of the ATM and ATR kinases by the MRN complex. In terms of processing, (Microbial infection) Following infection by adenovirus E4, ubiquitinated and degraded by a SCF-like E3 ubiquitin ligase complex containing viral proteins E1B-55K and E4-ORF6.

Its subcellular location is the nucleus. It is found in the chromosome. The protein localises to the telomere. With respect to regulation, interaction with SAMHD1 stimulates the double-strand-specific 3'-5' exonuclease activity. RBBP8/CtIP specifically promotes the endonuclease activity to clear protein-DNA adducts and generate clean double-strand break ends. DYNLL1-binding inhibits the activity of MRE11. MRE11 activity is inhibited by C1QBP: in absence of DNA damage, C1QBP interacts with unphosphorylated MRE11, preventing formation and activity of the MRN complex. The mirin-derivative PFM39, specifically inhibits the 3'-5' exonuclease activity. The N-alkylated mirin-derivatives PFM03 and PFM01 specifically inhibit the endonuclease activity. Its function is as follows. Core component of the MRN complex, which plays a central role in double-strand break (DSB) repair, DNA recombination, maintenance of telomere integrity and meiosis. The MRN complex is involved in the repair of DNA double-strand breaks (DSBs) via homologous recombination (HR), an error-free mechanism which primarily occurs during S and G2 phases. The complex (1) mediates the end resection of damaged DNA, which generates proper single-stranded DNA, a key initial steps in HR, and is (2) required for the recruitment of other repair factors and efficient activation of ATM and ATR upon DNA damage. Within the MRN complex, MRE11 possesses both single-strand endonuclease activity and double-strand-specific 3'-5' exonuclease activity. After DSBs, MRE11 is loaded onto DSBs sites and cleaves DNA by cooperating with RBBP8/CtIP to initiate end resection. MRE11 first endonucleolytically cleaves the 5' strand at DNA DSB ends to prevent non-homologous end joining (NHEJ) and licence HR. It then generates a single-stranded DNA gap via 3' to 5' exonucleolytic degradation to create entry sites for EXO1- and DNA2-mediated 5' to 3' long-range resection, which is required for single-strand invasion and recombination. RBBP8/CtIP specifically promotes the endonuclease activity of MRE11 to clear protein-DNA adducts and generate clean double-strand break ends. MRE11 endonuclease activity is also enhanced by AGER/RAGE. The MRN complex is also required for DNA damage signaling via activation of the ATM and ATR kinases: the nuclease activity of MRE11 is not required to activate ATM and ATR. The MRN complex is also required for the processing of R-loops. The MRN complex is involved in the activation of the cGAS-STING pathway induced by DNA damage during tumorigenesis: the MRN complex acts by displacing CGAS from nucleosome sequestration, thereby activating it. In telomeres the MRN complex may modulate t-loop formation. In terms of biological role, MRE11 contains two DNA-binding domains (DBDs), enabling it to bind both single-stranded DNA (ssDNA) and double-stranded DNA (dsDNA). The protein is Double-strand break repair protein MRE11 of Homo sapiens (Human).